A 264-amino-acid chain; its full sequence is Phosphonoacetaldehyde hydrolase (264 aa).

The Nucleophile role is filled by D9. Positions 9 and 11 each coordinate Mg(2+). The active-site Schiff-base intermediate with substrate is K50. D183 contacts Mg(2+).

Belongs to the HAD-like hydrolase superfamily. PhnX family. Homodimer. Mg(2+) serves as cofactor.

It catalyses the reaction phosphonoacetaldehyde + H2O = acetaldehyde + phosphate + H(+). Functionally, involved in phosphonate degradation. The chain is Phosphonoacetaldehyde hydrolase from Bacillus cereus (strain AH820).